Consider the following 229-residue polypeptide: MLVCIPEVLPKSEVAEFRRLMDAADWEDGRSTAGAQSAMVKRNEQLPPDSDLARALGRRIVSALTGNPKFVSAAVPLQIFPPLFNRYAASGGHHFGIHVDNAVRGDHLTGLRIRTDLSVTLFLAEPDEYDGGELVIEDTYGSHEVKLAAGDAVLYPSTSLHMVTPVTRGARVASFFWLQSMIRDAQARSMIYDLDNAIQALVERLGRDDPETVKLTGIYHNLIRYWAEV.

The Fe2OG dioxygenase domain maps to 78–180 (QIFPPLFNRY…RVASFFWLQS (103 aa)). H98, D100, and H161 together coordinate Fe cation. R171 lines the 2-oxoglutarate pocket.

Fe(2+) serves as cofactor. Requires L-ascorbate as cofactor.

The sequence is that of PKHD-type hydroxylase RPA3479 from Rhodopseudomonas palustris (strain ATCC BAA-98 / CGA009).